A 548-amino-acid chain; its full sequence is Asparagine--tRNA ligase, cytoplasmic (548 aa).

Residues 1 to 25 form a disordered region; the sequence is MVLAELYVSDREGSDATGDGTKEKP. The segment covering 8-25 has biased composition (basic and acidic residues); sequence VSDREGSDATGDGTKEKP. S61 is modified (phosphoserine). The disordered stretch occupies residues 69–91; it reads MWHREQMKSESREKKEAEDSLRR. Basic and acidic residues predominate over residues 71–91; it reads HREQMKSESREKKEAEDSLRR. K244 is subject to N6-acetyllysine. The residue at position 482 (S482) is a Phosphoserine. An N6-acetyllysine modification is found at K490.

The protein belongs to the class-II aminoacyl-tRNA synthetase family. Homodimer.

Its subcellular location is the cytoplasm. It catalyses the reaction tRNA(Asn) + L-asparagine + ATP = L-asparaginyl-tRNA(Asn) + AMP + diphosphate + H(+). In terms of biological role, catalyzes the attachment of asparagine to tRNA(Asn) in a two-step reaction: asparagine is first activated by ATP to form Asn-AMP and then transferred to the acceptor end of tRNA(Asn). In addition to its essential role in protein synthesis, acts as a signaling molecule that induced migration of CCR3-expressing cells. Has an essential role in the development of the cerebral cortex, being required for proper proliferation of radial glial cells. This chain is Asparagine--tRNA ligase, cytoplasmic, found in Homo sapiens (Human).